We begin with the raw amino-acid sequence, 844 residues long: MSDSTVAASASASASSSAKSSLSDLRQFRINKNASSVVASPSRTERVPGKKRIQVMADSDSDGNDSQTPKKTKLELTVKEKEERYMAAAKISPHFDTMAIQESLSRTNWDVAASVRYLRENCKPKGHNGPLAKSKLKPRSNGISGGNFSDNDHSDDDDVKQSKDQVYDSDDSDSEMSTKMTGQRKKVFQFMNEASLIELQSVKTLSEKKALAIIDVRPFSDWSDLRQKLESIRMSGDLLNYAQELINKQNTVAAILSKCNNMVSRLEKAISNGAGIVEQPKLLSSGLQLADYQIIGLNWLTVMHKQEMNGILADEMGLGKTIQVIAFLAYLKENGLSQAAHLIVVPSSTLDNWEAEISRWCPELVVEKYHGSQDERRRMRGRFAKDGFTGFDVLLTTYHIVGSTPEERKMFRVCKLDYVIFDEAHMLKNMTTQRYANLITINARMRILLTGTPLQNNLLELISLLCFVMPKFFAKSIEDIKSLFAKKGKSDGDQDEVSQFQETQIQRAKRIMKPFVLRRLKKDVLKNLPKKLSLVEKVPMSSQQKIYYHELVDYYSNNKGEVCSSSERAGIAIMMEMRRIANHPLLMRHYFTDANLRGFSKRLANASSFKKTNEQYIFEELAVMSDFQVYQMMNKHEFYDVKIPDNLICDSGKFLYLDTLLPKLKAEGHRVLLFSQFTMMLDIVEEYLRIRKFGFCRLDGATAVNVRQDLITDFNGDDSIFVFLLSTKAGGVGINLTAADTCVIHDIDFNPYNDKQAEDRCHRMGQQRPVTIYRLISESTIEEGILMAAEEKLKLEKDITSNEKGEVHEQRCVVKLLTTALGLDKDQEEQLNNSLNNSIASPAK.

Residues 1 to 23 show a composition bias toward low complexity; the sequence is MSDSTVAASASASASSSAKSSLS. 2 disordered regions span residues 1-75 and 121-180; these read MSDS…TKLE and NCKP…STKM. Residues 30–42 are compositionally biased toward polar residues; that stretch reads INKNASSVVASPS. One can recognise a Helicase ATP-binding domain in the interval 301–471; the sequence is TVMHKQEMNG…ISLLCFVMPK (171 aa). ATP is bound at residue 314-321; that stretch reads DEMGLGKT. A DEGH box motif is present at residues 422–425; the sequence is DEAH. A Helicase C-terminal domain is found at 656 to 818; sequence YLDTLLPKLK…EQRCVVKLLT (163 aa). Phosphoserine occurs at positions 834, 838, and 841.

The protein belongs to the SNF2/RAD54 helicase family.

It is found in the nucleus. It catalyses the reaction ATP + H2O = ADP + phosphate + H(+). DNA helicase that possesses intrinsic ATP-dependent nucleosome-remodeling activity and is both required for DNA repair and heterochromatin organization. Promotes DNA end resection of double-strand breaks (DSBs) following DNA damage: probably acts by weakening histone DNA interactions in nucleosomes flanking DSBs. This chain is SWI/SNF-related matrix-associated actin-dependent regulator of chromatin subfamily A containing DEAD/H box 1 homolog (Etl1), found in Drosophila melanogaster (Fruit fly).